The chain runs to 191 residues: Penicillin-binding protein activator LpoB (191 aa).

Residues 1 to 16 form the signal peptide; the sequence is MKRILFVILSTMLLAS. The N-palmitoyl cysteine moiety is linked to residue Cys17. Cys17 is lipidated: S-diacylglycerol cysteine. A disordered region spans residues 25 to 48; it reads QPAPVTPVEPKEKQETTPIEPSEK.

The protein belongs to the LpoB family. As to quaternary structure, interacts with PBP1b.

It localises to the cell outer membrane. In terms of biological role, regulator of peptidoglycan synthesis that is essential for the function of penicillin-binding protein 1B (PBP1b). The sequence is that of Penicillin-binding protein activator LpoB from Xenorhabdus nematophila (strain ATCC 19061 / DSM 3370 / CCUG 14189 / LMG 1036 / NCIMB 9965 / AN6).